A 118-amino-acid chain; its full sequence is Vesicle-associated membrane protein 1 (118 aa).

A compositionally biased stretch (low complexity) spans 1–15 (MSAPAQPPAEGTEGA). Positions 1–36 (MSAPAQPPAEGTEGAAPGGGPPGPPPNMTSNRRLQQ) are disordered. Topologically, residues 1–96 (MSAPAQPPAE…KRKYWWKNCK (96 aa)) are cytoplasmic. A v-SNARE coiled-coil homology domain is found at 33-93 (RLQQTQAQVE…AKLKRKYWWK (61 aa)). Position 63 is a phosphoserine (serine 63). Residues 97 to 116 (MMIMLGAICAIIVVVIVIYF) form a helical; Anchor for type IV membrane protein membrane-spanning segment. Topologically, residues 117–118 (FT) are vesicular.

This sequence belongs to the synaptobrevin family. Interacts with VAPA and VAPB. (Microbial infection) Targeted and hydrolyzed by C.botulinum neurotoxin type X (BoNT/X) which hydrolyzes the 68-Arg-|-Ala-69 bond and probably inhibits neurotransmitter release. It remains unknown whether BoNT/X is ever produced, or what organisms it targets. As to expression, highly expressed in the zona incerta and rostral periolivary region of the brain. Other neuroanatomical regions show negligible expression. Expressed in the retina, expression observed in the outer segments of the photoreceptors, in the outer and inner plexiform layers, and in a subset of ganglion cells.

It localises to the cytoplasmic vesicle. The protein resides in the secretory vesicle. Its subcellular location is the synaptic vesicle membrane. The protein localises to the synapse. It is found in the synaptosome. It localises to the cytoplasmic vesicle membrane. Involved in the targeting and/or fusion of transport vesicles to their target membrane. The polypeptide is Vesicle-associated membrane protein 1 (Vamp1) (Mus musculus (Mouse)).